We begin with the raw amino-acid sequence, 308 residues long: Maspardin (308 aa).

The region spanning 87-159 (FCDGFRKLLD…NSFWLMPAFM (73 aa)) is the AB hydrolase-1 domain. Serine 304 carries the phosphoserine modification.

The protein belongs to the AB hydrolase superfamily. As to quaternary structure, interacts with CD4. Interacts with ALDH16A1. Expressed in cell lines FT.1 and in a L cell fibroblast derivative (at protein level).

It is found in the cytoplasm. May play a role as a negative regulatory factor in CD4-dependent T-cell activation. The polypeptide is Maspardin (Spg21) (Mus musculus (Mouse)).